A 621-amino-acid chain; its full sequence is 2-hydroxyacyl-CoA lyase 2 (621 aa).

The chain crosses the membrane as a helical span at residues 7 to 29 (LGCSLGAALGGVIFASYKLGLLY). Glu-87 serves as a coordination point for thiamine diphosphate. Positions 459-539 (DFVGSAAYIM…VIALVGNDAC (81 aa)) are thiamine pyrophosphate binding. Residues Asp-510 and Asn-536 each coordinate Mg(2+).

It belongs to the TPP enzyme family. Requires Mg(2+) as cofactor. The cofactor is thiamine diphosphate.

It is found in the endoplasmic reticulum membrane. It carries out the reaction 2-hydroxyoctadecanoyl-CoA = heptadecanal + formyl-CoA. It catalyses the reaction (2R)-hydroxyhexadecanoyl-CoA = pentadecanal + formyl-CoA. Functionally, endoplasmic reticulum 2-OH acyl-CoA lyase involved in the cleavage (C1 removal) reaction in the fatty acid alpha-oxydation in a thiamine pyrophosphate (TPP)-dependent manner. This chain is 2-hydroxyacyl-CoA lyase 2 (ilvbl), found in Danio rerio (Zebrafish).